The following is an 87-amino-acid chain: uncharacterized protein (87 aa).

The disordered stretch occupies residues 52–87 (KWQPRPDANNSDTTTSTEDSTTDTETEYSTTEDELA). The segment covering 71-87 (STTDTETEYSTTEDELA) has biased composition (acidic residues).

This is an uncharacterized protein from Autographa californica nuclear polyhedrosis virus (AcMNPV).